The chain runs to 92 residues: RNA-binding protein Hfq (92 aa).

One can recognise a Sm domain in the interval 9-68; the sequence is DPFLNALRRERVPVSIYLVNGIKLQGQVESFDQFVILLKNTVSQMVYKHAISTVVPSRPF.

This sequence belongs to the Hfq family. In terms of assembly, homohexamer.

Its function is as follows. RNA chaperone that binds small regulatory RNA (sRNAs) and mRNAs to facilitate mRNA translational regulation in response to envelope stress, environmental stress and changes in metabolite concentrations. Also binds with high specificity to tRNAs. This Shewanella piezotolerans (strain WP3 / JCM 13877) protein is RNA-binding protein Hfq.